A 117-amino-acid chain; its full sequence is TTPSYVAFTDTERLWPFQVINEAGKPKDAGVIAGLNVLRATAGDTHLGGEDFDNRLVSHFVEEFKRLRTACERAKIHDIVLVGGSTRLLQDYFNGRDLNKITITNDKGRLSKEEIER.

Residues 72-75 and 84-87 each bind ATP; these read ERAK and GSTR.

The protein belongs to the heat shock protein 70 family. Interacts with PRKN. Detected at higher levels in caput epididymal spermatazoa than in cauda epididymal spermatazoa (at protein level).

Molecular chaperone implicated in a wide variety of cellular processes, including protection of the proteome from stress, folding and transport of newly synthesized polypeptides, activation of proteolysis of misfolded proteins and the formation and dissociation of protein complexes. Plays a pivotal role in the protein quality control system, ensuring the correct folding of proteins, the re-folding of misfolded proteins and controlling the targeting of proteins for subsequent degradation. This is achieved through cycles of ATP binding, ATP hydrolysis and ADP release, mediated by co-chaperones. The affinity for polypeptides is regulated by its nucleotide bound state. In the ATP-bound form, it has a low affinity for substrate proteins. However, upon hydrolysis of the ATP to ADP, it undergoes a conformational change that increases its affinity for substrate proteins. It goes through repeated cycles of ATP hydrolysis and nucleotide exchange, which permits cycles of substrate binding and release. Positive regulator of PRKN translocation to damaged mitochondria. This chain is Heat shock 70 kDa protein 1-like, found in Mesocricetus auratus (Golden hamster).